Reading from the N-terminus, the 241-residue chain is Pyrroloquinoline-quinone synthase (241 aa).

Belongs to the PqqC family.

It catalyses the reaction 6-(2-amino-2-carboxyethyl)-7,8-dioxo-1,2,3,4,7,8-hexahydroquinoline-2,4-dicarboxylate + 3 O2 = pyrroloquinoline quinone + 2 H2O2 + 2 H2O + H(+). It participates in cofactor biosynthesis; pyrroloquinoline quinone biosynthesis. In terms of biological role, ring cyclization and eight-electron oxidation of 3a-(2-amino-2-carboxyethyl)-4,5-dioxo-4,5,6,7,8,9-hexahydroquinoline-7,9-dicarboxylic-acid to PQQ. This is Pyrroloquinoline-quinone synthase from Ruegeria pomeroyi (strain ATCC 700808 / DSM 15171 / DSS-3) (Silicibacter pomeroyi).